Reading from the N-terminus, the 143-residue chain is MGFGKSSPFLAFSILVLCQAGSLQATPLRSALETLPDPGALSEKEGRLLLAALVKAYVQRKTNELEQEEEQEETEDSSLDSSRAKRCSNLSTCVLSAYWKDLNNYHRYSGMGFGPETPGKKRDIANSLEKDLSSHFGVPTDAN.

Residues 1–25 form the signal peptide; that stretch reads MGFGKSSPFLAFSILVLCQAGSLQA. A propeptide spanning residues 26 to 84 is cleaved from the precursor; sequence TPLRSALETLPDPGALSEKEGRLLLAALVKAYVQRKTNELEQEEEQEETEDSSLDSSRA. A Phosphoserine modification is found at S42. A disordered region spans residues 62–86; sequence TNELEQEEEQEETEDSSLDSSRAKR. Residues 65-78 show a composition bias toward acidic residues; the sequence is LEQEEEQEETEDSS. C87 and C93 are oxidised to a cystine. The disordered stretch occupies residues 112–143; sequence GFGPETPGKKRDIANSLEKDLSSHFGVPTDAN. P118 carries the proline amide modification. A compositionally biased stretch (basic and acidic residues) spans 118–133; it reads PGKKRDIANSLEKDLS. Positions 122–143 are excised as a propeptide; that stretch reads RDIANSLEKDLSSHFGVPTDAN.

Belongs to the calcitonin family.

Its subcellular location is the secreted. In terms of biological role, calcitonin is a peptide hormone that causes a rapid but short-lived drop in the level of calcium and phosphate in blood by promoting the incorporation of those ions in the bones. Calcitonin function is mediated by the calcitonin receptor/CALCR and the CALCR-RAMP2 (AMYR2) receptor complex. The polypeptide is Calcitonin (CALCA) (Ovis aries (Sheep)).